The chain runs to 358 residues: Alanine racemase (358 aa).

K35 serves as the catalytic Proton acceptor; specific for D-alanine. Position 35 is an N6-(pyridoxal phosphate)lysine (K35). R130 contributes to the substrate binding site. The Proton acceptor; specific for L-alanine role is filled by Y255. A substrate-binding site is contributed by M303.

Belongs to the alanine racemase family. Requires pyridoxal 5'-phosphate as cofactor.

It catalyses the reaction L-alanine = D-alanine. It functions in the pathway amino-acid biosynthesis; D-alanine biosynthesis; D-alanine from L-alanine: step 1/1. Catalyzes the interconversion of L-alanine and D-alanine. May also act on other amino acids. The chain is Alanine racemase (alr) from Shewanella sediminis (strain HAW-EB3).